A 43-amino-acid chain; its full sequence is Protein PsbN (43 aa).

A helical membrane pass occupies residues 5–27 (TLVAISISCLLVSFTGYALYTAF).

Belongs to the PsbN family.

Its subcellular location is the plastid. The protein resides in the chloroplast thylakoid membrane. Its function is as follows. May play a role in photosystem I and II biogenesis. The protein is Protein PsbN of Cryptomeria japonica (Japanese cedar).